Here is a 542-residue protein sequence, read N- to C-terminus: MGNQSLVVLTESKGEYENETELPVKKSSRDNNIGESLTATAFTQSEDEMVDSNQKWQNPNYFKYAWQEYLFIFTCMISQLLNQAGTTQTLSIMNILSDSFGSEGNSKSWLMASFPLVSGSFILISGRLGDIYGLKKMLLVGYVLVIIWSLICGITKYSGSDTFFIISRAFQGLGIAFVLPNVLGIIGNIYVGGTFRKNIVISFVGAMAPIGATLGCLFAGLIGTEDPKQWPWAFYAYSIAAFINFVLSIYAIPSTIPTNIHHFSMDWIGSVLGVIGLILLNFVWNQAPISGWNQAYIIVILIISVIFLVVFIIYEIRFAKTPLLPRAVIKDRHMIQIMLALFFGWGSFGIFTFYYFQFQLNIRQYTALWAGGTYFMFLIWGIIAALLVGFTIKNVSPSVFLFFSMVAFNVGSIMASVTPVHETYFRTQLGTMIILSFGMDLSFPASSIIFSDNLPMEYQGMAGSLVNTVVNYSMSLCLGMGATVETQVNSDGKHLLKGYRGAQYLGIGLASLACMISGLYMVESFIKGRRARAAAEYDCTVA.

The Cytoplasmic segment spans residues 1 to 108 (MGNQSLVVLT…SFGSEGNSKS (108 aa)). Residues 109 to 129 (WLMASFPLVSGSFILISGRLG) form a helical membrane-spanning segment. Residues 130–136 (DIYGLKK) are Extracellular-facing. Residues 137-157 (MLLVGYVLVIIWSLICGITKY) traverse the membrane as a helical segment. Residues 158 to 172 (SGSDTFFIISRAFQG) are Cytoplasmic-facing. Residues 173–193 (LGIAFVLPNVLGIIGNIYVGG) traverse the membrane as a helical segment. Residues 194 to 198 (TFRKN) are Extracellular-facing. Residues 199 to 219 (IVISFVGAMAPIGATLGCLFA) form a helical membrane-spanning segment. At 220–231 (GLIGTEDPKQWP) the chain is on the cytoplasmic side. A helical transmembrane segment spans residues 232–252 (WAFYAYSIAAFINFVLSIYAI). The Extracellular portion of the chain corresponds to 253–262 (PSTIPTNIHH). The helical transmembrane segment at 263–283 (FSMDWIGSVLGVIGLILLNFV) threads the bilayer. Over 284-295 (WNQAPISGWNQA) the chain is Cytoplasmic. The chain crosses the membrane as a helical span at residues 296–316 (YIIVILIISVIFLVVFIIYEI). The Extracellular portion of the chain corresponds to 317–333 (RFAKTPLLPRAVIKDRH). Residues 334–354 (MIQIMLALFFGWGSFGIFTFY) form a helical membrane-spanning segment. Over 355–371 (YFQFQLNIRQYTALWAG) the chain is Cytoplasmic. Residues 372–392 (GTYFMFLIWGIIAALLVGFTI) form a helical membrane-spanning segment. At 393-399 (KNVSPSV) the chain is on the extracellular side. The helical transmembrane segment at 400-420 (FLFFSMVAFNVGSIMASVTPV) threads the bilayer. Residues 421 to 429 (HETYFRTQL) are Cytoplasmic-facing. Residues 430 to 450 (GTMIILSFGMDLSFPASSIIF) form a helical membrane-spanning segment. Residues 451-505 (SDNLPMEYQGMAGSLVNTVVNYSMSLCLGMGATVETQVNSDGKHLLKGYRGAQYL) lie on the Extracellular side of the membrane. Asn-471 carries N-linked (GlcNAc...) asparagine glycosylation. Residues 506 to 526 (GIGLASLACMISGLYMVESFI) traverse the membrane as a helical segment. Residues 527–542 (KGRRARAAAEYDCTVA) are Cytoplasmic-facing.

The protein belongs to the major facilitator superfamily.

It localises to the membrane. Functionally, putative component of the machinery responsible for pumping aminotriazole (and possibly other toxic compounds) out of the cell. Probable ATP-dependent export permease. Appears to confer resistance only to aminotriazole. The sequence is that of Aminotriazole resistance protein (ATR1) from Saccharomyces cerevisiae (strain ATCC 204508 / S288c) (Baker's yeast).